The primary structure comprises 144 residues: Large ribosomal subunit protein uL22 (144 aa).

Positions 124-137 (RLKKRVLGQNKRKQ) are enriched in basic residues. The disordered stretch occupies residues 124–144 (RLKKRVLGQNKRKQSVSGEKK).

Belongs to the universal ribosomal protein uL22 family. Part of the 50S ribosomal subunit.

Its function is as follows. This protein binds specifically to 23S rRNA; its binding is stimulated by other ribosomal proteins, e.g. L4, L17, and L20. It is important during the early stages of 50S assembly. It makes multiple contacts with different domains of the 23S rRNA in the assembled 50S subunit and ribosome. The globular domain of the protein is located near the polypeptide exit tunnel on the outside of the subunit, while an extended beta-hairpin is found that lines the wall of the exit tunnel in the center of the 70S ribosome. The polypeptide is Large ribosomal subunit protein uL22 (Mycoplasmoides gallisepticum (strain R(low / passage 15 / clone 2)) (Mycoplasma gallisepticum)).